A 180-amino-acid chain; its full sequence is ATP synthase subunit delta (180 aa).

The protein belongs to the ATPase delta chain family. As to quaternary structure, F-type ATPases have 2 components, F(1) - the catalytic core - and F(0) - the membrane proton channel. F(1) has five subunits: alpha(3), beta(3), gamma(1), delta(1), epsilon(1). F(0) has three main subunits: a(1), b(2) and c(10-14). The alpha and beta chains form an alternating ring which encloses part of the gamma chain. F(1) is attached to F(0) by a central stalk formed by the gamma and epsilon chains, while a peripheral stalk is formed by the delta and b chains.

Its subcellular location is the cell membrane. In terms of biological role, f(1)F(0) ATP synthase produces ATP from ADP in the presence of a proton or sodium gradient. F-type ATPases consist of two structural domains, F(1) containing the extramembraneous catalytic core and F(0) containing the membrane proton channel, linked together by a central stalk and a peripheral stalk. During catalysis, ATP synthesis in the catalytic domain of F(1) is coupled via a rotary mechanism of the central stalk subunits to proton translocation. Its function is as follows. This protein is part of the stalk that links CF(0) to CF(1). It either transmits conformational changes from CF(0) to CF(1) or is implicated in proton conduction. This chain is ATP synthase subunit delta, found in Bacillus cereus (strain B4264).